Reading from the N-terminus, the 572-residue chain is Cytochrome P450 monooxygenase xilC (572 aa).

Residue Cys-515 participates in heme binding.

The protein belongs to the cytochrome P450 family. The cofactor is heme.

The protein operates within secondary metabolite biosynthesis. Its function is as follows. Cytochrome P450 monooxygenase; part of the gene cluster that mediates the biosynthesis of the 6-methyl-2-pyrone derivative xylariolide D. XilC hydroxylates the 5-alkyl-6-methyl-2-pyrone backbone called prexylariolide D, produced by the highly reducing polyketide synthase xilA, on its side chain to form xylariolide D. The chain is Cytochrome P450 monooxygenase xilC from Penicillium crustosum (Blue mold fungus).